The sequence spans 696 residues: Methionine synthase reductase (696 aa).

The region spanning 4 to 147 (FLLLYATQRG…VVEPWIDGLW (144 aa)) is the Flavodoxin-like domain. FMN is bound by residues 10-14 (TQRGQ) and 93-124 (LLGLGDSEYTYFCNGGKVIDKRLQELGAQRFY). Residues 166–245 (TLSRASDAPL…SSLSIPAVPP (80 aa)) form a hinge region. 2 positions are modified to phosphoserine: Ser-171 and Ser-188. One can recognise an FAD-binding FR-type domain in the interval 269–531 (DPSFQVPISK…PRATNAFHLP (263 aa)). Lys-289 contacts NADP(+). Residues 449-452 (RPYS) and 485-488 (GVCT) each bind FAD. NADP(+) is bound by residues 608–609 (SR), 622–624 (YVQ), and Asp-657. An FAD-binding site is contributed by Trp-695.

Forms a multiprotein complex with MMACHC, MMADHC and MTR. Requires FAD as cofactor. FMN serves as cofactor.

It is found in the cytoplasm. It catalyses the reaction 2 methylcob(III)alamin-[methionine synthase] + 2 S-adenosyl-L-homocysteine + NADP(+) + H(+) = 2 cob(II)alamin-[methionine synthase] + 2 S-adenosyl-L-methionine + NADPH. The enzyme catalyses 2 cob(II)alamin + A + 2 H2O + 2 H(+) = 2 aquacob(III)alamin + AH2. Its function is as follows. Key enzyme in methionine and folate homeostasis responsible for the reactivation of methionine synthase (MTR/MS) activity by catalyzing the reductive methylation of MTR-bound cob(II)alamin. Cobalamin (vitamin B12) forms a complex with MTR to serve as an intermediary in methyl transfer reactions that cycles between MTR-bound methylcob(III)alamin and MTR bound-cob(I)alamin forms, and occasional oxidative escape of the cob(I)alamin intermediate during the catalytic cycle leads to the inactive cob(II)alamin species. The processing of cobalamin in the cytosol occurs in a multiprotein complex composed of at least MMACHC, MMADHC, MTRR and MTR which may contribute to shuttle safely and efficiently cobalamin towards MTR in order to produce methionine. Also necessary for the utilization of methyl groups from the folate cycle, thereby affecting transgenerational epigenetic inheritance. Also acts as a molecular chaperone for methionine synthase by stabilizing apoMTR and incorporating methylcob(III)alamin into apoMTR to form the holoenzyme. Also serves as an aquacob(III)alamin reductase by reducing aquacob(III)alamin to cob(II)alamin; this reduction leads to stimulation of the conversion of apoMTR and aquacob(III)alamin to MTR holoenzyme. In Mus musculus (Mouse), this protein is Methionine synthase reductase.